The chain runs to 184 residues: ADP-ribosylation factor 6 (184 aa).

Gly2 carries the N-myristoyl glycine lipid modification. Residues 28–35, 71–75, and 130–133 each bind GTP; these read GLDAAGKT, DVGGQ, and NKQD.

The protein belongs to the small GTPase superfamily. Arf family.

It is found in the cell membrane. Its function is as follows. GTP-binding protein that functions as a molecular switch for the activation of 'new end take off' (NETO), a process in which the directions of cell growth change from a monopolar manner to a bipolar manner in fission yeast. Involved in supplying membrane to the growing new end. The chain is ADP-ribosylation factor 6 (arf6) from Schizosaccharomyces pombe (strain 972 / ATCC 24843) (Fission yeast).